Reading from the N-terminus, the 237-residue chain is Large ribosomal subunit protein uL3 (237 aa).

2 disordered regions span residues A133–K155 and P213–E237. The span at H135 to R150 shows a compositional bias: polar residues. The residue at position 151 (Q151) is an N5-methylglutamine. Positions A220 to E237 are enriched in low complexity.

Belongs to the universal ribosomal protein uL3 family. Part of the 50S ribosomal subunit. Forms a cluster with proteins L14 and L19. Methylated by PrmB.

Its function is as follows. One of the primary rRNA binding proteins, it binds directly near the 3'-end of the 23S rRNA, where it nucleates assembly of the 50S subunit. The chain is Large ribosomal subunit protein uL3 from Brucella abortus (strain S19).